A 330-amino-acid polypeptide reads, in one-letter code: uncharacterized protein (330 aa).

To H.influenzae HI_0461.

This is an uncharacterized protein from Escherichia coli (strain K12).